Reading from the N-terminus, the 697-residue chain is Phosphoribosylformylglycinamidine synthase subunit PurL (697 aa).

His34 is a catalytic residue. Residues Tyr37 and Lys76 each coordinate ATP. Glu78 serves as a coordination point for Mg(2+). Substrate is bound by residues 79–82 and Arg101; that span reads SHNH. His80 functions as the Proton acceptor in the catalytic mechanism. A Mg(2+)-binding site is contributed by Asp102. Gln224 is a binding site for substrate. Asp250 contributes to the Mg(2+) binding site. Position 294–296 (294–296) interacts with substrate; it reads ETQ. Residues Asp472 and Gly509 each contribute to the ATP site. Residue Ser512 participates in substrate binding.

This sequence belongs to the FGAMS family. As to quaternary structure, monomer. Part of the FGAM synthase complex composed of 1 PurL, 1 PurQ and 2 PurS subunits.

It localises to the cytoplasm. It catalyses the reaction N(2)-formyl-N(1)-(5-phospho-beta-D-ribosyl)glycinamide + L-glutamine + ATP + H2O = 2-formamido-N(1)-(5-O-phospho-beta-D-ribosyl)acetamidine + L-glutamate + ADP + phosphate + H(+). It functions in the pathway purine metabolism; IMP biosynthesis via de novo pathway; 5-amino-1-(5-phospho-D-ribosyl)imidazole from N(2)-formyl-N(1)-(5-phospho-D-ribosyl)glycinamide: step 1/2. Its function is as follows. Part of the phosphoribosylformylglycinamidine synthase complex involved in the purines biosynthetic pathway. Catalyzes the ATP-dependent conversion of formylglycinamide ribonucleotide (FGAR) and glutamine to yield formylglycinamidine ribonucleotide (FGAM) and glutamate. The FGAM synthase complex is composed of three subunits. PurQ produces an ammonia molecule by converting glutamine to glutamate. PurL transfers the ammonia molecule to FGAR to form FGAM in an ATP-dependent manner. PurS interacts with PurQ and PurL and is thought to assist in the transfer of the ammonia molecule from PurQ to PurL. In Pyrobaculum aerophilum (strain ATCC 51768 / DSM 7523 / JCM 9630 / CIP 104966 / NBRC 100827 / IM2), this protein is Phosphoribosylformylglycinamidine synthase subunit PurL.